A 277-amino-acid polypeptide reads, in one-letter code: Undecaprenyl-diphosphatase 1 (277 aa).

A run of 7 helical transmembrane segments spans residues 46–66 (VVGFSAVIQVGAIAAVLVYFF), 95–115 (WWVIYATIPIVIVGLAAKSLI), 119–139 (LASLWVVAASLIVGSGVMWAA), 165–185 (ILALLFPGFSRSGATMSTALI), 191–211 (VAATRLSFFLGIPALTGAGLY), 216–236 (ALGTGVGVAPLAVGTIVSFVV), and 256–276 (FVIYRIVIGVLLLGLLGTGVL).

The protein belongs to the UppP family.

It localises to the cell membrane. It carries out the reaction di-trans,octa-cis-undecaprenyl diphosphate + H2O = di-trans,octa-cis-undecaprenyl phosphate + phosphate + H(+). Its function is as follows. Catalyzes the dephosphorylation of undecaprenyl diphosphate (UPP). Confers resistance to bacitracin. The polypeptide is Undecaprenyl-diphosphatase 1 (Streptomyces avermitilis (strain ATCC 31267 / DSM 46492 / JCM 5070 / NBRC 14893 / NCIMB 12804 / NRRL 8165 / MA-4680)).